The following is a 210-amino-acid chain: Large ribosomal subunit protein uL4 (210 aa).

A compositionally biased stretch (polar residues) spans 44-54 (KRQGTASTLTR). Residues 44–85 (KRQGTASTLTRSEVRGGGRKPYKQKGTGRARQGSIRTPLRPG) are disordered. Over residues 60–71 (GGRKPYKQKGTG) the composition is skewed to basic residues.

The protein belongs to the universal ribosomal protein uL4 family. Part of the 50S ribosomal subunit.

One of the primary rRNA binding proteins, this protein initially binds near the 5'-end of the 23S rRNA. It is important during the early stages of 50S assembly. It makes multiple contacts with different domains of the 23S rRNA in the assembled 50S subunit and ribosome. Functionally, forms part of the polypeptide exit tunnel. The polypeptide is Large ribosomal subunit protein uL4 (Prochlorococcus marinus (strain MIT 9301)).